Consider the following 491-residue polypeptide: Glutathione synthetase GSH2 (491 aa).

Residue arginine 128 participates in substrate binding. Glutamate 146 lines the ATP pocket. Glutamate 146 and asparagine 148 together coordinate Mg(2+). Residues 150 to 153, 228 to 230, glutamine 234, and 285 to 288 contribute to the substrate site; these read VSVS, ERN, and RTGY. Residues lysine 324, 382–391, tyrosine 393, 415–418, and glutamate 442 contribute to the ATP site; these read KPQREGGGNN and MELI. Glutamate 386 provides a ligand contact to Mg(2+). Arginine 467 provides a ligand contact to substrate. Positions 469 and 475 each coordinate ATP. 478–479 is a binding site for substrate; the sequence is VA.

Belongs to the eukaryotic GSH synthase family. Homodimer. Mg(2+) is required as a cofactor.

The catalysed reaction is gamma-L-glutamyl-L-cysteine + glycine + ATP = glutathione + ADP + phosphate + H(+). The protein operates within sulfur metabolism; glutathione biosynthesis; glutathione from L-cysteine and L-glutamate: step 2/2. This Saccharomyces cerevisiae (strain ATCC 204508 / S288c) (Baker's yeast) protein is Glutathione synthetase GSH2 (GSH2).